The following is a 302-amino-acid chain: Cell division protein FtsQ (302 aa).

Residues 1 to 41 form a disordered region; it reads MPAVVRGGPPKPRRPRAEAPASPSKGKPAPRKAQPAAKLHA. Over 1–50 the chain is Cytoplasmic; that stretch reads MPAVVRGGPPKPRRPRAEAPASPSKGKPAPRKAQPAAKLHAARGVGLSPT. A compositionally biased stretch (low complexity) spans 18-38; it reads EAPASPSKGKPAPRKAQPAAK. The helical transmembrane segment at 51–71 threads the bilayer; sequence VALSVAGAALGLGLVVMLATG. Topologically, residues 72 to 302 are periplasmic; sequence HRAERLGASM…LPGQPAADGA (231 aa). The POTRA domain maps to 94–162; the sequence is FRLKTVHIRG…DTVLIAVEER (69 aa).

Belongs to the FtsQ/DivIB family. FtsQ subfamily.

The protein resides in the cell inner membrane. Its function is as follows. Essential cell division protein. The chain is Cell division protein FtsQ from Caulobacter vibrioides (strain ATCC 19089 / CIP 103742 / CB 15) (Caulobacter crescentus).